The chain runs to 328 residues: Surface antigen CRP170 (328 aa).

Repeats lie at residues 38–102 and 103–167; these read NAPC…CKKC.

The protein is Surface antigen CRP170 of Giardia intestinalis (Giardia lamblia).